The following is a 499-amino-acid chain: MELMKQLEVWFLVGSQHLYGAATLKQVADHAHTITSQLNERAGLPVKIVLKPTGTTLDEISAIARDANHDQRCIGLMVWMHTFSPAKMWIPALSQLQKPLLQFHTQFNRDLPWSEIDMDFMNLNQTAHGGREFGFMGARLRLPRTVVVGHWQDEEAHRKLGNWMRVAAAIHDSRHLKIARFGDNMRNVAVTEGDKIEAQIQFGYQVNYHPVGDLVKVIDAVPASDIEALLAEYEESYTLTEAVQAGGVLRASLYEAARQELGMKKFLTDGGFGAFTTTFEDLHGLHQLPGLACQRLMQQGFGFGAEGDWKTAALLRTLKVMGTGLAGGTSFMEDYTYHLEAGNNLVLGAHMLEVCPSIAADKPVLDAQHLGIGKKADPARLLFAAPAGKAVNASLIDLGNRFRLVVNQLEVVDLPEAMPKLPVASALWQPMPDLQTSAEAWILAGAAHHSVFTQSVDIEQLRTFADLMGIEFVVIDKHTRIPELKQTLQWNEVYYKLCH.

The Mn(2+) site is built by Glu-306, Glu-333, His-350, and His-449.

Belongs to the arabinose isomerase family. Mn(2+) serves as cofactor.

The catalysed reaction is beta-L-arabinopyranose = L-ribulose. It functions in the pathway carbohydrate degradation; L-arabinose degradation via L-ribulose; D-xylulose 5-phosphate from L-arabinose (bacterial route): step 1/3. In terms of biological role, catalyzes the conversion of L-arabinose to L-ribulose. The polypeptide is L-arabinose isomerase (Aeromonas hydrophila subsp. hydrophila (strain ATCC 7966 / DSM 30187 / BCRC 13018 / CCUG 14551 / JCM 1027 / KCTC 2358 / NCIMB 9240 / NCTC 8049)).